The chain runs to 194 residues: dCTP deaminase (194 aa).

DCTP-binding positions include 110–115, D128, 136–138, Y171, K178, and Q182; these read RSSLAR and VLE. E138 serves as the catalytic Proton donor/acceptor.

The protein belongs to the dCTP deaminase family. Homotrimer.

The catalysed reaction is dCTP + H2O + H(+) = dUTP + NH4(+). The protein operates within pyrimidine metabolism; dUMP biosynthesis; dUMP from dCTP (dUTP route): step 1/2. Functionally, catalyzes the deamination of dCTP to dUTP. The sequence is that of dCTP deaminase from Glaesserella parasuis serovar 5 (strain SH0165) (Haemophilus parasuis).